A 155-amino-acid chain; its full sequence is Glutaredoxin-related protein 5, mitochondrial (155 aa).

Residues 1–14 (MNSVFRSTARCLRS) constitute a mitochondrion transit peptide. A Glutaredoxin domain is found at 42 to 145 (QKNLEEMVKK…EELQKLGIRS (104 aa)). Lys59 provides a ligand contact to glutathione. Cys67 serves as a coordination point for [2Fe-2S] cluster. Glutathione contacts are provided by residues 97–101 (RQGIK), Ile109, and 122–123 (CD).

Homodimer.

Its subcellular location is the mitochondrion. Functionally, monothiol glutaredoxin involved in mitochondrial iron-sulfur (Fe/S) cluster transfer. Receives iron-sulfur clusters from scaffold protein ISCU and mediates their transfer to apoproteins, to the 4Fe/FS cluster biosynthesis machinery, or export from mitochondrion. Required for normal hemoglobin biosynthesis. The protein is Glutaredoxin-related protein 5, mitochondrial (glrx5) of Danio rerio (Zebrafish).